The chain runs to 642 residues: Dihydrolipoyllysine-residue acetyltransferase component of pyruvate dehydrogenase complex, mitochondrial (642 aa).

A mitochondrion-targeting transit peptide spans 1–85; sequence MWRVCARRAR…LLGSPSRRSY (85 aa). The disordered stretch occupies residues 80 to 99; it reads PSRRSYSLPPHQKVPLPSLS. 2 Lipoyl-binding domains span residues 90 to 166 and 217 to 293; these read HQKV…CITV and HMQI…CIIV. Phosphoserine is present on S99. K131 and K258 each carry N6-lipoyllysine. The interval 313 to 346 is disordered; it reads LKPQAAPPAPPPVAAVPPTPQPVAPTPSAAPAGP. Positions 317–337 are enriched in pro residues; that stretch reads AAPPAPPPVAAVPPTPQPVAP. The region spanning 351 to 388 is the Peripheral subunit-binding (PSBD) domain; the sequence is FVSPLAKKLAAEKGIDLTQVKGTGPEGRIIKKDIDSFV. Residue R456 participates in CoA binding. Residue K461 is modified to N6-acetyllysine. K468 is modified (N6-succinyllysine). S470 provides a ligand contact to CoA. At K542 the chain carries N6-succinyllysine. CoA contacts are provided by S561, N562, and G586. Catalysis depends on residues H615 and D619.

This sequence belongs to the 2-oxoacid dehydrogenase family. Part of the pyruvate dehydrogenase complex (PDHc) that is a multi-enzyme complex composed of multiple copies of three enzymes, pyruvate dehydrogenase (subunits PDH1A and PDHB, E1 component), dihydrolipoamide acetyltransferase (DLAT, E2 component), and dihydrolipoamide dehydrogenase (DLD, E3 component) to which is added an additional protein the E3-binding protein (PDHX, E3BP). In terms of structural architecture, the E2 and E3BP components assemble into a 60meric central core with icosahedral symmetry. The central core is decorated with E1 and E3 proteins. Currently, two alternative models for the E2:E3BP stoichiometry are considered as being either 48:12 (E2(48)-E3BP(12)) or 40:20 (E2(40)-E3BP(20)). Interacts with PDK2 and PDK3. Interacts with SIRT4. Interacts with PDHB. (R)-lipoate serves as cofactor. Delipoylated at Lys-131 and Lys-258 by SIRT4, delipoylation decreases the PHD complex activity.

The protein localises to the mitochondrion matrix. It catalyses the reaction N(6)-[(R)-dihydrolipoyl]-L-lysyl-[protein] + acetyl-CoA = N(6)-[(R)-S(8)-acetyldihydrolipoyl]-L-lysyl-[protein] + CoA. Functionally, as part of the pyruvate dehydrogenase complex, catalyzes the transfers of an acetyl group to a lipoic acid moiety. The pyruvate dehydrogenase complex, catalyzes the overall conversion of pyruvate to acetyl-CoA and CO(2), and thereby links cytoplasmic glycolysis and the mitochondrial tricarboxylic acid (TCA) cycle. The chain is Dihydrolipoyllysine-residue acetyltransferase component of pyruvate dehydrogenase complex, mitochondrial from Mus musculus (Mouse).